We begin with the raw amino-acid sequence, 247 residues long: Isoprenyl transferase (247 aa).

Aspartate 18 is an active-site residue. Aspartate 18 is a binding site for Mg(2+). Residues 19 to 22 (GNGR), tryptophan 23, arginine 31, histidine 35, and 63 to 65 (SSE) each bind substrate. The active-site Proton acceptor is the asparagine 66. Substrate-binding positions include tryptophan 67, arginine 69, arginine 186, and 192–194 (RLS). Glutamate 205 lines the Mg(2+) pocket.

The protein belongs to the UPP synthase family. Homodimer. Requires Mg(2+) as cofactor.

In terms of biological role, catalyzes the condensation of isopentenyl diphosphate (IPP) with allylic pyrophosphates generating different type of terpenoids. The polypeptide is Isoprenyl transferase (Rhizobium meliloti (strain 1021) (Ensifer meliloti)).